We begin with the raw amino-acid sequence, 210 residues long: Noranthrone monooxygenase (210 aa).

4 helical membrane passes run 59–79 (TGSF…PILI), 105–125 (GIAL…YSVG), 131–151 (WMVA…FMNA), and 188–208 (VRAL…CGVV).

The protein belongs to the anthrone oxygenase family.

It is found in the membrane. It catalyses the reaction noranthrone + O2 = norsolorinic acid + H2O. It functions in the pathway mycotoxin biosynthesis; aflatoxin biosynthesis. Its function is as follows. Monooxygenase that converts norsolorinic acid anthrone to norsolorinic acid during aflatoxin biosynthesis. In Aspergillus flavus (strain ATCC 200026 / FGSC A1120 / IAM 13836 / NRRL 3357 / JCM 12722 / SRRC 167), this protein is Noranthrone monooxygenase (hypC).